A 230-amino-acid polypeptide reads, in one-letter code: UPF0173 metal-dependent hydrolase MM_2300 (230 aa).

Belongs to the UPF0173 family.

The chain is UPF0173 metal-dependent hydrolase MM_2300 from Methanosarcina mazei (strain ATCC BAA-159 / DSM 3647 / Goe1 / Go1 / JCM 11833 / OCM 88) (Methanosarcina frisia).